The chain runs to 348 residues: Phosphate acyltransferase (348 aa).

The protein belongs to the PlsX family. In terms of assembly, homodimer. Probably interacts with PlsY.

The protein localises to the cytoplasm. The catalysed reaction is a fatty acyl-[ACP] + phosphate = an acyl phosphate + holo-[ACP]. The protein operates within lipid metabolism; phospholipid metabolism. In terms of biological role, catalyzes the reversible formation of acyl-phosphate (acyl-PO(4)) from acyl-[acyl-carrier-protein] (acyl-ACP). This enzyme utilizes acyl-ACP as fatty acyl donor, but not acyl-CoA. The chain is Phosphate acyltransferase from Rhizobium etli (strain ATCC 51251 / DSM 11541 / JCM 21823 / NBRC 15573 / CFN 42).